The following is a 199-amino-acid chain: Charged multivesicular body protein 1B1 (199 aa).

Residues 10-48 (NLKFAAKELNRSSKKCDKEEKAEKAKIKKAIQKGNMEVA) are a coiled coil. The tract at residues 132 to 156 (MEDTMSSTTTLTTPQNQVDMLLQEM) is interaction with IST1. The segment at 167–199 (ELPQGQTGSVGTSVASAEQDELSQRLARLRDQV) is disordered. Over residues 170 to 182 (QGQTGSVGTSVAS) the composition is skewed to polar residues. Residues 174–199 (GSVGTSVASAEQDELSQRLARLRDQV) are interaction with SPAST. Positions 178-199 (TSVASAEQDELSQRLARLRDQV) form a coiled coil. The interval 180–196 (VASAEQDELSQRLARLR) is interaction with VPS4A, MITD1 and STAMBP. Positions 180–199 (VASAEQDELSQRLARLRDQV) are interaction with VTA1. Residues 183–199 (AEQDELSQRLARLRDQV) are interaction with VPS4B. The short motif at 186 to 196 (DELSQRLARLR) is the MIT-interacting motif element.

This sequence belongs to the SNF7 family. In terms of assembly, probable peripherally associated component of the endosomal sorting required for transport complex III (ESCRT-III). ESCRT-III components are thought to multimerize to form a flat lattice on the perimeter membrane of the endosome. Several assembly forms of ESCRT-III may exist that interact and act sequentially. Interacts with CHMP1A. Interacts with VTA1; the interaction probably involves the open conformation of CHMP1B. Interacts with CHMP2A. Interacts with VPS4A; the interaction is direct. Interacts with VPS4B; the interaction is direct. Interacts with SPAST (via MIT domain); the interaction is direct. Interacts with IST1. Interacts with MITD1. Interacts with STAMBP.

Its subcellular location is the cytoplasm. It is found in the cytosol. The protein resides in the endosome. The protein localises to the late endosome membrane. Its function is as follows. Probable peripherally associated component of the endosomal sorting required for transport complex III (ESCRT-III) which is involved in multivesicular bodies (MVBs) formation and sorting of endosomal cargo proteins into MVBs. MVBs contain intraluminal vesicles (ILVs) that are generated by invagination and scission from the limiting membrane of the endosome and mostly are delivered to lysosomes enabling degradation of membrane proteins, such as stimulated growth factor receptors, lysosomal enzymes and lipids. The MVB pathway appears to require the sequential function of ESCRT-O, -I,-II and -III complexes. ESCRT-III proteins mostly dissociate from the invaginating membrane before the ILV is released. The ESCRT machinery also functions in topologically equivalent membrane fission events, such as the terminal stages of cytokinesis. ESCRT-III proteins are believed to mediate the necessary vesicle extrusion and/or membrane fission activities, possibly in conjunction with the AAA ATPase VPS4. Involved in cytokinesis. Involved in recruiting VPS4A and/or VPS4B and SPAST to the midbody of dividing cells. The chain is Charged multivesicular body protein 1B1 from Mus musculus (Mouse).